The following is a 159-amino-acid chain: Transcriptional repressor NrdR (159 aa).

The segment at 3 to 34 (CPFCNAADSKVIDSRLAAEGCQIRRRRECISC) is a zinc-finger region. In terms of domain architecture, ATP-cone spans 49 to 139 (PRVIKSNGKN…VYQDFQDVEA (91 aa)).

It belongs to the NrdR family. It depends on Zn(2+) as a cofactor.

Negatively regulates transcription of bacterial ribonucleotide reductase nrd genes and operons by binding to NrdR-boxes. The protein is Transcriptional repressor NrdR of Acinetobacter baylyi (strain ATCC 33305 / BD413 / ADP1).